Here is a 215-residue protein sequence, read N- to C-terminus: Large ribosomal subunit protein uL3 (215 aa).

Over residues 131-144 the composition is skewed to low complexity; sequence SSSRASHGNSRSHN. Residues 131–150 are disordered; the sequence is SSSRASHGNSRSHNVPGSIG. Gln-153 is modified (N5-methylglutamine).

This sequence belongs to the universal ribosomal protein uL3 family. Part of the 50S ribosomal subunit. Forms a cluster with proteins L14 and L19. Post-translationally, methylated by PrmB.

Its function is as follows. One of the primary rRNA binding proteins, it binds directly near the 3'-end of the 23S rRNA, where it nucleates assembly of the 50S subunit. In Nitrosomonas europaea (strain ATCC 19718 / CIP 103999 / KCTC 2705 / NBRC 14298), this protein is Large ribosomal subunit protein uL3.